The chain runs to 210 residues: High frequency lysogenization protein HflD homolog (210 aa).

Residues 103 to 130 (EAKAKLAERLQQIERQLPLYENDIMADQ) adopt a coiled-coil conformation.

This sequence belongs to the HflD family.

Its subcellular location is the cytoplasm. It is found in the cell inner membrane. In Actinobacillus pleuropneumoniae serotype 3 (strain JL03), this protein is High frequency lysogenization protein HflD homolog.